The following is a 142-amino-acid chain: Large ribosomal subunit protein bL17 (142 aa).

It belongs to the bacterial ribosomal protein bL17 family. As to quaternary structure, part of the 50S ribosomal subunit. Contacts protein L32.

The protein is Large ribosomal subunit protein bL17 of Wolbachia pipientis subsp. Culex pipiens (strain wPip).